The following is a 197-amino-acid chain: Holliday junction branch migration complex subunit RuvA (197 aa).

A domain I region spans residues Met-1–Leu-64. Residues Thr-65 to Pro-143 are domain II. A flexible linker region spans residues Ala-144–Gln-153. Positions Gln-153 to Arg-197 are domain III.

Belongs to the RuvA family. In terms of assembly, homotetramer. Forms an RuvA(8)-RuvB(12)-Holliday junction (HJ) complex. HJ DNA is sandwiched between 2 RuvA tetramers; dsDNA enters through RuvA and exits via RuvB. An RuvB hexamer assembles on each DNA strand where it exits the tetramer. Each RuvB hexamer is contacted by two RuvA subunits (via domain III) on 2 adjacent RuvB subunits; this complex drives branch migration. In the full resolvosome a probable DNA-RuvA(4)-RuvB(12)-RuvC(2) complex forms which resolves the HJ.

It is found in the cytoplasm. The RuvA-RuvB-RuvC complex processes Holliday junction (HJ) DNA during genetic recombination and DNA repair, while the RuvA-RuvB complex plays an important role in the rescue of blocked DNA replication forks via replication fork reversal (RFR). RuvA specifically binds to HJ cruciform DNA, conferring on it an open structure. The RuvB hexamer acts as an ATP-dependent pump, pulling dsDNA into and through the RuvAB complex. HJ branch migration allows RuvC to scan DNA until it finds its consensus sequence, where it cleaves and resolves the cruciform DNA. This Solibacter usitatus (strain Ellin6076) protein is Holliday junction branch migration complex subunit RuvA.